A 413-amino-acid polypeptide reads, in one-letter code: Gamma-glutamyl phosphate reductase (413 aa).

It belongs to the gamma-glutamyl phosphate reductase family.

The protein localises to the cytoplasm. The catalysed reaction is L-glutamate 5-semialdehyde + phosphate + NADP(+) = L-glutamyl 5-phosphate + NADPH + H(+). The protein operates within amino-acid biosynthesis; L-proline biosynthesis; L-glutamate 5-semialdehyde from L-glutamate: step 2/2. Functionally, catalyzes the NADPH-dependent reduction of L-glutamate 5-phosphate into L-glutamate 5-semialdehyde and phosphate. The product spontaneously undergoes cyclization to form 1-pyrroline-5-carboxylate. The sequence is that of Gamma-glutamyl phosphate reductase from Thermus thermophilus (strain ATCC 27634 / DSM 579 / HB8).